Reading from the N-terminus, the 289-residue chain is Diaminopimelate epimerase (289 aa).

Substrate is bound by residues N13, Q47, and N67. The Proton donor role is filled by C76. Residues 77 to 78 (GN), N167, N200, and 218 to 219 (ER) each bind substrate. C227 serves as the catalytic Proton acceptor. Residue 228–229 (GT) coordinates substrate.

The protein belongs to the diaminopimelate epimerase family. As to quaternary structure, homodimer.

Its subcellular location is the cytoplasm. The enzyme catalyses (2S,6S)-2,6-diaminopimelate = meso-2,6-diaminopimelate. It participates in amino-acid biosynthesis; L-lysine biosynthesis via DAP pathway; DL-2,6-diaminopimelate from LL-2,6-diaminopimelate: step 1/1. Functionally, catalyzes the stereoinversion of LL-2,6-diaminopimelate (L,L-DAP) to meso-diaminopimelate (meso-DAP), a precursor of L-lysine and an essential component of the bacterial peptidoglycan. The chain is Diaminopimelate epimerase from Burkholderia mallei (strain NCTC 10247).